A 275-amino-acid chain; its full sequence is NH(3)-dependent NAD(+) synthetase (275 aa).

ATP is bound at residue 46-53 (GISGGQDS). Residue Asp52 coordinates Mg(2+). Arg140 contacts deamido-NAD(+). Residue Thr160 coordinates ATP. Glu165 contributes to the Mg(2+) binding site. Deamido-NAD(+)-binding residues include Lys173 and Asp180. Residues Lys189 and Thr211 each coordinate ATP. A deamido-NAD(+)-binding site is contributed by 260 to 261 (HK).

Belongs to the NAD synthetase family. As to quaternary structure, homodimer.

The catalysed reaction is deamido-NAD(+) + NH4(+) + ATP = AMP + diphosphate + NAD(+) + H(+). Its pathway is cofactor biosynthesis; NAD(+) biosynthesis; NAD(+) from deamido-NAD(+) (ammonia route): step 1/1. In terms of biological role, catalyzes the ATP-dependent amidation of deamido-NAD to form NAD. Uses ammonia as a nitrogen source. This Enterobacter sp. (strain 638) protein is NH(3)-dependent NAD(+) synthetase.